A 660-amino-acid chain; its full sequence is F-box/LRR-repeat protein 5 (660 aa).

Residues 1–157 form a hemerythrin-like region; that stretch reads MAPFPDEVDL…IKKKVIAQHC (157 aa). His-15, His-57, Glu-58, Glu-61, His-80, His-124, and Glu-127 together coordinate Fe(3+). Positions 200 to 246 constitute an F-box domain; it reads SASICNLPPEVMLNIFSYLNPQDLCRCSQVNTKWAQLARTGSLWRHL. The interval 283-305 is disordered; that stretch reads YQEWDEDADIDESEETGEDDPSI. Residues 285-303 are compositionally biased toward acidic residues; sequence EWDEDADIDESEETGEDDP. LRR repeat units lie at residues 311–337, 338–362, 363–389, 390–417, 551–576, 577–604, 605–630, and 631–649; these read EKELLNSLVHYILPYIGHSVKTLVLAY, SSATSNKVIRQILEYCPNMEHLDLT, QTDISDSAFNGWCFGACQTLRHIDLSG, CEKITDSALEKLSVALGMPLAHKKRLLK, IRDICPGSAKLDQQVARVLQFLSLSG, CHQITDHGLRVLTIGGGLPNLEHLNLSG, CLNVTGSGLQDLVSACPSLNDEHFYY, and CDNISGPHAATASGCQNLQ. The [2Fe-2S] cluster site is built by Cys-631, Cys-645, Cys-655, and Cys-656.

Part of a SCF (SKP1-cullin-F-box) protein ligase complex. [2Fe-2S] cluster serves as cofactor. Ubiquitinated upon iron and oxygen depletion, leading to its degradation by the proteasome. Ubiquitination is regulated by the hemerythrin-like region that acts as an oxygen and iron sensor.

The protein resides in the cytoplasm. The protein localises to the perinuclear region. It is found in the nucleus. It functions in the pathway protein modification; protein ubiquitination. Its function is as follows. Component of some SCF (SKP1-cullin-F-box) protein ligase complex that plays a central role in iron homeostasis by promoting the ubiquitination and subsequent degradation of ireb2/irp2. Upon high iron and oxygen level, it specifically recognizes and binds ireb2/irp2, promoting its ubiquitination and degradation by the proteasome. In Xenopus tropicalis (Western clawed frog), this protein is F-box/LRR-repeat protein 5 (fbxl5).